The following is an 86-amino-acid chain: Small ribosomal subunit protein bS20 (86 aa).

The interval 1–27 is disordered; the sequence is MANSKQAKKRAGQSEKRRQHNASRRSM.

Belongs to the bacterial ribosomal protein bS20 family.

In terms of biological role, binds directly to 16S ribosomal RNA. The sequence is that of Small ribosomal subunit protein bS20 from Colwellia psychrerythraea (strain 34H / ATCC BAA-681) (Vibrio psychroerythus).